The primary structure comprises 490 residues: B3 domain-containing protein REM14 (490 aa).

DNA-binding regions (TF-B3) lie at residues 3–95, 130–226, and 236–333; these read NQHF…LGPS, CFSA…LPKG, and CFVA…LSNE. The segment at 343-367 is disordered; it reads NEVESLSTDQESHEESSHNEKISRR. The segment covering 352 to 364 has biased composition (basic and acidic residues); that stretch reads QESHEESSHNEKI. Positions 387 to 484 form a DNA-binding region, TF-B3 4; sequence FVTLNLTPYN…TSCVLKFCSK (98 aa).

It is found in the nucleus. This is B3 domain-containing protein REM14 (REM14) from Arabidopsis thaliana (Mouse-ear cress).